Reading from the N-terminus, the 244-residue chain is Eukaryotic translation initiation factor 4E type 1B (244 aa).

A compositionally biased stretch (basic and acidic residues) spans 1–26 (MNKVEGGGHKEEVVVKEKEVVKEKPS). Positions 1 to 57 (MNKVEGGGHKEEVVVKEKEVVKEKPSEATAEGVQAGEAKDLPGSLKTQRRKAHREHP) are disordered. The interval 65-68 (HPLQ) is EIF4EBP1/2/3 binding. 84 to 85 (WQ) contributes to the mRNA binding site. The tract at residues 101 to 105 (WAVYS) is EIF4EBP1/2/3 binding. 130–131 (WE) provides a ligand contact to mRNA. The interval 160–167 (ETLLCLVG) is EIF4EBP1/2/3 binding. MRNA contacts are provided by residues 185–190 (RTKRDK) and 233–235 (AKS).

This sequence belongs to the eukaryotic initiation factor 4E family. In terms of assembly, EIF4F is a multi-subunit complex, the composition of which varies with external and internal environmental conditions. It is composed of at least EIF4A, EIF4E and EIF4G.

Its function is as follows. Recognizes and binds the 7-methylguanosine-containing mRNA cap during an early step in the initiation of protein synthesis and facilitates ribosome binding by inducing the unwinding of the mRNAs secondary structures. This Mus musculus (Mouse) protein is Eukaryotic translation initiation factor 4E type 1B (Eif4e1b).